Here is a 284-residue protein sequence, read N- to C-terminus: RNase adapter protein RapZ (284 aa).

8 to 15 (GRSGSGKS) is a binding site for ATP. 56–59 (DVRN) contributes to the GTP binding site. Residues 266-284 (RSRGKNVQSRHRTLEKRKP) form an RNA-binding region.

Belongs to the RapZ-like family. RapZ subfamily. Homotrimer.

Modulates the synthesis of GlmS, by affecting the processing and stability of the regulatory small RNA GlmZ. When glucosamine-6-phosphate (GlcN6P) concentrations are high in the cell, RapZ binds GlmZ and targets it to cleavage by RNase E. Consequently, GlmZ is inactivated and unable to activate GlmS synthesis. Under low GlcN6P concentrations, RapZ is sequestered and inactivated by an other regulatory small RNA, GlmY, preventing GlmZ degradation and leading to synthesis of GlmS. In Escherichia coli O1:K1 / APEC, this protein is RNase adapter protein RapZ.